The chain runs to 287 residues: 2-dehydro-3-deoxyphosphooctonate aldolase (287 aa).

It belongs to the KdsA family.

It localises to the cytoplasm. The enzyme catalyses D-arabinose 5-phosphate + phosphoenolpyruvate + H2O = 3-deoxy-alpha-D-manno-2-octulosonate-8-phosphate + phosphate. Its pathway is carbohydrate biosynthesis; 3-deoxy-D-manno-octulosonate biosynthesis; 3-deoxy-D-manno-octulosonate from D-ribulose 5-phosphate: step 2/3. It participates in bacterial outer membrane biogenesis; lipopolysaccharide biosynthesis. This is 2-dehydro-3-deoxyphosphooctonate aldolase from Rhodopseudomonas palustris (strain BisB5).